Here is a 419-residue protein sequence, read N- to C-terminus: L-rhamnose isomerase (419 aa).

Residues His-262, Asp-294, and Asp-296 each coordinate Mn(2+).

The protein belongs to the rhamnose isomerase family. Homotetramer. It depends on Mn(2+) as a cofactor.

It localises to the cytoplasm. It catalyses the reaction L-rhamnopyranose = L-rhamnulose. It participates in carbohydrate degradation; L-rhamnose degradation; glycerone phosphate from L-rhamnose: step 1/3. Its function is as follows. Catalyzes the interconversion of L-rhamnose and L-rhamnulose. This Escherichia coli O9:H4 (strain HS) protein is L-rhamnose isomerase.